The sequence spans 519 residues: 3-octaprenyl-4-hydroxybenzoate carboxy-lyase (519 aa).

Asparagine 177 provides a ligand contact to Mn(2+). Residues 180 to 182 (IYR), 194 to 196 (RWL), and 199 to 200 (RG) each bind prenylated FMN. Position 243 (glutamate 243) interacts with Mn(2+). Aspartate 318 serves as the catalytic Proton donor.

It belongs to the UbiD family. As to quaternary structure, homohexamer. Requires prenylated FMN as cofactor. Mn(2+) serves as cofactor.

Its subcellular location is the cell membrane. The enzyme catalyses a 4-hydroxy-3-(all-trans-polyprenyl)benzoate + H(+) = a 2-(all-trans-polyprenyl)phenol + CO2. The protein operates within cofactor biosynthesis; ubiquinone biosynthesis. Functionally, catalyzes the decarboxylation of 3-octaprenyl-4-hydroxy benzoate to 2-octaprenylphenol, an intermediate step in ubiquinone biosynthesis. This Burkholderia pseudomallei (strain 1710b) protein is 3-octaprenyl-4-hydroxybenzoate carboxy-lyase.